The following is a 302-amino-acid chain: Putative cyclin-D6-1 (302 aa).

It belongs to the cyclin family. Cyclin D subfamily.

This is Putative cyclin-D6-1 (CYCD6-1) from Arabidopsis thaliana (Mouse-ear cress).